Reading from the N-terminus, the 734-residue chain is Photosystem I P700 chlorophyll a apoprotein A2 (734 aa).

8 consecutive transmembrane segments (helical) span residues I46 to A69, L135 to Q158, L175 to I199, I273 to Y291, L330 to Y353, A369 to I395, A417 to H439, and F517 to V535. Positions 559 and 568 each coordinate [4Fe-4S] cluster. The next 2 helical transmembrane spans lie at A575–W596 and L643–I665. 3 residues coordinate chlorophyll a: H654, M662, and Y670. Phylloquinone is bound at residue W671. The helical transmembrane segment at L707–A727 threads the bilayer.

Belongs to the PsaA/PsaB family. As to quaternary structure, the PsaA/B heterodimer binds the P700 chlorophyll special pair and subsequent electron acceptors. PSI consists of a core antenna complex that captures photons, and an electron transfer chain that converts photonic excitation into a charge separation. The eukaryotic PSI reaction center is composed of at least 11 subunits. P700 is a chlorophyll a/chlorophyll a' dimer, A0 is one or more chlorophyll a, A1 is one or both phylloquinones and FX is a shared 4Fe-4S iron-sulfur center. serves as cofactor.

The protein resides in the plastid. Its subcellular location is the chloroplast thylakoid membrane. It carries out the reaction reduced [plastocyanin] + hnu + oxidized [2Fe-2S]-[ferredoxin] = oxidized [plastocyanin] + reduced [2Fe-2S]-[ferredoxin]. Functionally, psaA and PsaB bind P700, the primary electron donor of photosystem I (PSI), as well as the electron acceptors A0, A1 and FX. PSI is a plastocyanin/cytochrome c6-ferredoxin oxidoreductase, converting photonic excitation into a charge separation, which transfers an electron from the donor P700 chlorophyll pair to the spectroscopically characterized acceptors A0, A1, FX, FA and FB in turn. Oxidized P700 is reduced on the lumenal side of the thylakoid membrane by plastocyanin or cytochrome c6. The chain is Photosystem I P700 chlorophyll a apoprotein A2 from Oltmannsiellopsis viridis (Marine flagellate).